We begin with the raw amino-acid sequence, 216 residues long: LexA repressor (216 aa).

A DNA-binding region (H-T-H motif) is located at residues 28–48 (RAEIAAEFGFSSPNAAEEHLR). Residues Ser134 and Lys171 each act as for autocatalytic cleavage activity in the active site.

The protein belongs to the peptidase S24 family. Homodimer.

It carries out the reaction Hydrolysis of Ala-|-Gly bond in repressor LexA.. Represses a number of genes involved in the response to DNA damage (SOS response), including recA and lexA. In the presence of single-stranded DNA, RecA interacts with LexA causing an autocatalytic cleavage which disrupts the DNA-binding part of LexA, leading to derepression of the SOS regulon and eventually DNA repair. The polypeptide is LexA repressor (Ralstonia nicotianae (strain ATCC BAA-1114 / GMI1000) (Ralstonia solanacearum)).